Here is a 996-residue protein sequence, read N- to C-terminus: Disabled homolog 2-interacting protein (996 aa).

One can recognise a C2 domain in the interval 1 to 118; the sequence is MENLRRAVHP…AGRQFVEKWY (118 aa). The Ras-GAP domain occupies 194-402; that stretch reads GKVKDFLTDL…TNMQRFLLEI (209 aa). The segment at 453–750 is necessary for interaction with AKT1; that stretch reads LRDVHTALST…RTPPTMLSTL (298 aa). Residues 460 to 475 are compositionally biased toward polar residues; the sequence is LSTPGSGQLPGTNDLA. 2 disordered regions span residues 460 to 486 and 522 to 545; these read LSTP…SSVS and RSSG…PDLQ. Positions 476-486 are enriched in low complexity; sequence STPGSGSSSVS. A compositionally biased stretch (polar residues) spans 522-538; the sequence is RSSGVQPSPARSSSYSE. Phosphoserine; by MAP3K5 and RIPK1 is present on Ser-535. Ser-554 carries the phosphoserine modification. Disordered regions lie at residues 611 to 630, 650 to 672, 702 to 805, 822 to 841, and 971 to 996; these read VPTP…PQLL, PRGL…NSEE, SLTE…SPNA, EDEG…SKEE, and RNGV…SSNC. The span at 659–672 shows a compositional bias: low complexity; sequence EGHSSLSSHSNSEE. Positions 726–738 are enriched in pro residues; sequence QPPPPPPPPPPAP. Composition is skewed to polar residues over residues 746-762 and 774-783; these read MLST…TLAS and LRQQSSSSKG. Ser-785 and Ser-802 each carry phosphoserine. Over residues 830 to 841 the composition is skewed to basic and acidic residues; it reads PPHRDRLRSKEE. A coiled-coil region spans residues 832-966; sequence HRDRLRSKEE…SALTQLKERY (135 aa). The segment covering 974–996 has biased composition (polar residues); sequence VSPTNPTKLQITENGEFRNSSNC.

In terms of assembly, on plasma membrane, exists in an inactive form complexed with TNFR1; in response to TNF-alpha, dissociates from TNFR1 complex, translocates to cytoplasm and forms part of an intracellular signaling complex comprising TRADD, RIPK1, TRAF2 and MAP3K5. Interacts (via NPXY motif) with DAB2 (via PID domain). Interacts (via PH domain) with ERN1. Part of a cytoplasmic complex made of HIPK1, DAB2IP and MAP3K5 in response to TNF-alpha; this complex formation promotes MAP3K5-JNK activation and subsequent apoptosis. Interacts (via N-terminal domain) with JAK2; the interaction occurs in a IFNG/IFN-gamma-dependent manner and inhibits JAK2 autophosphorylation activity. Interacts (via C2 domain) with GSK3B; the interaction stimulates GSK3B kinase activation. Interacts (via C2 domain) with PPP2CA. Interacts (via proline-rich motif) with a regulatory p85 subunit (via SH3 domain) of the PI3K complex; the interaction inhibits the PI3K-AKT complex activity in a TNF-alpha-dependent manner in prostate cancer (PCa) cells. Interacts with AKT1; the interaction is increased in a TNF-alpha-induced manner. Interacts (via C2 domain and active form preferentially) with KDR/VEGFR2 (tyrosine-phosphorylated active form preferentially); the interaction occurs at the late phase of VEGFA response and inhibits KDR/VEGFR2 activity. Interacts (via N-terminus C2 domain) with MAP3K5 ('Ser-966' dephosphorylated form preferentially); the interaction occurs in a TNF-alpha-induced manner. Interacts (via Ras-GAP domain) with the catalytic subunit of protein phosphatase PP2A; the interaction occurs in resting endothelial cells, is further enhanced by TNF-alpha stimulation and is required to bridge PP2A to MAP3K5. Interacts (via C-terminus PER domain) with TRAF2 (via zinc fingers); the interaction occurs in a TNF-alpha-dependent manner. Interacts with 14-3-3 proteins; the interaction occurs in a TNF-alpha-dependent manner. Interacts (via Ras-GAP domain) with RIPK1 (via kinase domain); the interaction occurs in a TNF-alpha-dependent manner. Interacts with DAB1 and DAB2. Interacts with RAB40C; acts as a GAP for RAB40C. Post-translationally, in response to TNF-alpha-induction, phosphorylated at Ser-535; phosphorylation leads to a conformational change, and thus, increases its association with 14-3-3 proteins, MAP3K5, RIPK1 and TRAF2 in endothelial cells; also stimulates regulatory p85 subunit sequestring and PI3K-p85 complex activity inhibition. In terms of tissue distribution, expressed in brain, lung, thymus, bladder and skeletal muscle. Up-regulatedd during prostate degeneration.

It is found in the cytoplasm. It localises to the cell membrane. The protein localises to the membrane. Its subcellular location is the cell projection. The protein resides in the dendrite. Functions as a scaffold protein implicated in the regulation of a large spectrum of both general and specialized signaling pathways. Involved in several processes such as innate immune response, inflammation and cell growth inhibition, apoptosis, cell survival, angiogenesis, cell migration and maturation. Also plays a role in cell cycle checkpoint control; reduces G1 phase cyclin levels resulting in G0/G1 cell cycle arrest. Mediates signal transduction by receptor-mediated inflammatory signals, such as the tumor necrosis factor (TNF), interferon (IFN) or lipopolysaccharide (LPS). Modulates the balance between phosphatidylinositol 3-kinase (PI3K)-AKT-mediated cell survival and apoptosis stimulated kinase (MAP3K5)-JNK signaling pathways; sequesters both AKT1 and MAP3K5 and counterbalances the activity of each kinase by modulating their phosphorylation status in response to pro-inflammatory stimuli. Acts as a regulator of the endoplasmic reticulum (ER) unfolded protein response (UPR) pathway; specifically involved in transduction of the ER stress-response to the JNK cascade through ERN1. Mediates TNF-alpha-induced apoptosis activation by facilitating dissociation of inhibitor 14-3-3 from MAP3K5; recruits the PP2A phosphatase complex which dephosphorylates MAP3K5 on 'Ser-966', leading to the dissociation of 13-3-3 proteins and activation of the MAP3K5-JNK signaling pathway in endothelial cells. Acts a negative regulator in the IFN-gamma-mediated JAK-STAT signaling cascade by inhibiting smooth muscle cell (VSMCs) proliferation and intimal expansion, and thus, prevents graft arteriosclerosis (GA). Acts as a GTPase-activating protein (GAP) for the ADP ribosylation factor 6 (ARF6). Promotes hydrolysis of the ARF6-bound GTP and thus, negatively regulates phosphatidylinositol 4,5-bisphosphate (PIP2)-dependent TLR4-TIRAP-MyD88 and NF-kappa-B signaling pathways in endothelial cells in response to lipopolysaccharides (LPS). Binds specifically to phosphatidylinositol 4-phosphate (PtdIns4P) and phosphatidylinositol 3-phosphate (PtdIns3P). In response to vascular endothelial growth factor (VEGFA), acts as a negative regulator of the VEGFR2-PI3K-mediated angiogenic signaling pathway by inhibiting endothelial cell migration and tube formation. In the developing brain, promotes both the transition from the multipolar to the bipolar stage and the radial migration of cortical neurons from the ventricular zone toward the superficial layer of the neocortex in a glial-dependent locomotion process. Probable downstream effector of the Reelin signaling pathway; promotes Purkinje cell (PC) dendrites development and formation of cerebellar synapses. Also functions as a tumor suppressor protein in prostate cancer progression; prevents cell proliferation and epithelial-to-mesenchymal transition (EMT) through activation of the glycogen synthase kinase-3 beta (GSK3B)-induced beta-catenin and inhibition of PI3K-AKT and Ras-MAPK survival downstream signaling cascades, respectively. Mediates TNF/TRAF2-induced MAP3K5-JNK activation, while it inhibits CHUK-NF-kappa-B signaling. Functions as a Ras GTPase-activating protein. May act as a tumor suppressor gene. The protein is Disabled homolog 2-interacting protein (Dab2ip) of Rattus norvegicus (Rat).